The following is a 225-amino-acid chain: Cytidylate kinase (225 aa).

Residue 11–19 (GPSGAGKGT) coordinates ATP.

It belongs to the cytidylate kinase family. Type 1 subfamily.

It is found in the cytoplasm. The catalysed reaction is CMP + ATP = CDP + ADP. The enzyme catalyses dCMP + ATP = dCDP + ADP. This Mannheimia succiniciproducens (strain KCTC 0769BP / MBEL55E) protein is Cytidylate kinase.